Consider the following 483-residue polypeptide: Teichuronic acid biosynthesis protein TuaB (483 aa).

Helical transmembrane passes span threonine 15–glycine 34, glutamate 41–phenylalanine 63, tryptophan 83–glycine 105, leucine 112–tyrosine 134, valine 154–serine 176, leucine 294–valine 316, tryptophan 321–proline 343, leucine 356–threonine 378, leucine 382–alanine 404, leucine 411–phenylalanine 433, and methionine 448–proline 470.

This sequence belongs to the polysaccharide synthase family.

Its subcellular location is the cell membrane. Its pathway is cell wall biogenesis; teichuronic acid biosynthesis. Its function is as follows. Might be involved in the translocation of teichuronic acid repeating units from the inner to the outer surface of the membrane. The sequence is that of Teichuronic acid biosynthesis protein TuaB (tuaB) from Bacillus subtilis (strain 168).